The chain runs to 906 residues: Ectonucleotide pyrophosphatase/phosphodiesterase family member 1 (906 aa).

A disordered region spans residues 1–25; it reads MERDGEQAGQGPRHGPAGNGRELES. The Cytoplasmic segment spans residues 1-58; it reads MERDGEQAGQGPRHGPAGNGRELESPAAASLLAPMDLGEEPLEKAERARTAKDPNTYK. Phosphoserine is present on S25. The short motif at 27–34 is the Di-leucine motif element; it reads AAASLLAP. A helical; Signal-anchor for type II membrane protein membrane pass occupies residues 59 to 79; the sequence is VLSLVLSVCVLTTILGCIFGL. Over 80–906 the chain is Extracellular; it reads KPSCAKEVKS…THLPIFSQED (827 aa). 2 SMB domains span residues 86 to 126 and 127 to 170; these read EVKS…VEPT and HIWT…QEKK. 10 disulfides stabilise this stretch: C90–C104, C94–C122, C102–C115, C108–C114, C131–C148, C136–C166, C146–C159, C152–C158, C177–C223, and C185–C397. N-linked (GlcNAc...) asparagine glycosylation occurs at N161. The interval 173–573 is phosphodiesterase; it reads VEEACETIDA…APNNESHGSL (401 aa). Residues D200, T238, and N259 each contribute to the AMP site. Zn(2+) contacts are provided by D200 and T238. T238 functions as the AMP-threonine intermediate in the catalytic mechanism. Residues T238 and N259 each coordinate CMP. Residues T238 and N259 each contribute to the dTMP site. Positions 238 and 259 each coordinate GMP. At T238 the chain carries Phosphothreonine. An N-linked (GlcNAc...) asparagine glycan is attached at N267. Residues L272, K277, and Y322 each contribute to the GMP site. Residues K277 and Y322 each coordinate AMP. CMP contacts are provided by K277 and Y322. Y322 lines the dTMP pocket. N-linked (GlcNAc...) asparagine glycosylation is present at N323. Residue D358 coordinates AMP. The Zn(2+) site is built by D358, H362, D405, and H406. A CMP-binding site is contributed by D358. D358 is a binding site for dTMP. Position 358 (D358) interacts with GMP. A 2',3'-cGAMP-binding site is contributed by H362. H406 lines the AMP pocket. H406 is a binding site for CMP. H406 provides a ligand contact to dTMP. H406 lines the GMP pocket. 6 cysteine pairs are disulfide-bonded: C413-C512, C462-C849, C596-C653, C607-C707, C609-C692, and C819-C829. N459 is a glycosylation site (N-linked (GlcNAc...) asparagine). S514 lines the 2',3'-cGAMP pocket. AMP is bound at residue H517. H517 contributes to the Zn(2+) binding site. Position 517 (H517) interacts with CMP. H517 lines the dTMP pocket. H517 lines the GMP pocket. Residues N567 and N624 are each glycosylated (N-linked (GlcNAc...) asparagine). The interval 579-628 is linker; the sequence is KPIYTPSHPKEESFLSQCPIKSVSSDLGCTCDPSIVPIMDFEKQFNLTTD. The tract at residues 635-906 is nuclease-like domain; sequence SMTVPNGRPR…THLPIFSQED (272 aa). Residues D781, D783, D785, R787, and D789 each coordinate Ca(2+).

This sequence belongs to the nucleotide pyrophosphatase/phosphodiesterase family. In terms of assembly, ectonucleotide pyrophosphatase/phosphodiesterase family member 1: Homodimer. Ectonucleotide pyrophosphatase/phosphodiesterase family member 1: Interacts with INSR; leading to inhibit INSR autophosphorylation and subsequent activation of INSR kinase activity. Ectonucleotide pyrophosphatase/phosphodiesterase family member 1, secreted form: Monomeric. It depends on Zn(2+) as a cofactor. In terms of processing, the secreted form is produced through cleavage at Lys-85 by intracellular processing.

The protein resides in the cell membrane. Its subcellular location is the basolateral cell membrane. It localises to the secreted. The enzyme catalyses Hydrolytically removes 5'-nucleotides successively from the 3'-hydroxy termini of 3'-hydroxy-terminated oligonucleotides.. It carries out the reaction a ribonucleoside 5'-triphosphate + H2O = a ribonucleoside 5'-phosphate + diphosphate + H(+). It catalyses the reaction ATP + H2O = AMP + diphosphate + H(+). The catalysed reaction is UTP + H2O = UMP + diphosphate + H(+). The enzyme catalyses GTP + H2O = GMP + diphosphate + H(+). It carries out the reaction CTP + H2O = CMP + diphosphate + H(+). It catalyses the reaction 2',3'-cGAMP + 2 H2O = GMP + AMP + 2 H(+). The catalysed reaction is P(1),P(4)-bis(5'-adenosyl) tetraphosphate + H2O = AMP + ATP + 2 H(+). The enzyme catalyses 3',5'-cyclic AMP + H2O = AMP + H(+). Its activity is regulated as follows. At low concentrations of ATP, a phosphorylated intermediate is formed which inhibits further hydrolysis. Functionally, nucleotide pyrophosphatase that generates diphosphate (PPi) and functions in bone mineralization and soft tissue calcification by regulating pyrophosphate levels. PPi inhibits bone mineralization and soft tissue calcification by binding to nascent hydroxyapatite crystals, thereby preventing further growth of these crystals. Preferentially hydrolyzes ATP, but can also hydrolyze other nucleoside 5' triphosphates such as GTP, CTP and UTP to their corresponding monophosphates with release of pyrophosphate, as well as diadenosine polyphosphates, and also 3',5'-cAMP to AMP. May also be involved in the regulation of the availability of nucleotide sugars in the endoplasmic reticulum and Golgi, and the regulation of purinergic signaling. Inhibits ectopic joint calcification and maintains articular chondrocytes by repressing hedgehog signaling; it is however unclear whether hedgehog inhibition is direct or indirect. Appears to modulate insulin sensitivity. Also involved in melanogenesis. Also able to hydrolyze 2',3'-cGAMP (cyclic GMP-AMP), a second messenger that activates TMEM173/STING and triggers type-I interferon production. 2',3'-cGAMP degradation takes place in the lumen or extracellular space, and not in the cytosol where it is produced; the role of 2',3'-cGAMP hydrolysis is therefore unclear. Not able to hydrolyze the 2',3'-cGAMP linkage isomer 3'-3'-cGAMP. In Rattus norvegicus (Rat), this protein is Ectonucleotide pyrophosphatase/phosphodiesterase family member 1.